A 156-amino-acid chain; its full sequence is Small ribosomal subunit protein uS7 (156 aa).

Belongs to the universal ribosomal protein uS7 family. In terms of assembly, part of the 30S ribosomal subunit. Contacts proteins S9 and S11.

In terms of biological role, one of the primary rRNA binding proteins, it binds directly to 16S rRNA where it nucleates assembly of the head domain of the 30S subunit. Is located at the subunit interface close to the decoding center, probably blocks exit of the E-site tRNA. This is Small ribosomal subunit protein uS7 from Bacillus licheniformis (strain ATCC 14580 / DSM 13 / JCM 2505 / CCUG 7422 / NBRC 12200 / NCIMB 9375 / NCTC 10341 / NRRL NRS-1264 / Gibson 46).